The primary structure comprises 306 residues: UDP-3-O-acyl-N-acetylglucosamine deacetylase (306 aa).

Zn(2+) contacts are provided by His-79, His-238, and Asp-242. His-265 acts as the Proton donor in catalysis.

The protein belongs to the LpxC family. Zn(2+) is required as a cofactor.

The enzyme catalyses a UDP-3-O-[(3R)-3-hydroxyacyl]-N-acetyl-alpha-D-glucosamine + H2O = a UDP-3-O-[(3R)-3-hydroxyacyl]-alpha-D-glucosamine + acetate. It functions in the pathway glycolipid biosynthesis; lipid IV(A) biosynthesis; lipid IV(A) from (3R)-3-hydroxytetradecanoyl-[acyl-carrier-protein] and UDP-N-acetyl-alpha-D-glucosamine: step 2/6. Its function is as follows. Catalyzes the hydrolysis of UDP-3-O-myristoyl-N-acetylglucosamine to form UDP-3-O-myristoylglucosamine and acetate, the committed step in lipid A biosynthesis. This Shewanella frigidimarina (strain NCIMB 400) protein is UDP-3-O-acyl-N-acetylglucosamine deacetylase.